We begin with the raw amino-acid sequence, 245 residues long: 1-(5-phosphoribosyl)-5-[(5-phosphoribosylamino)methylideneamino] imidazole-4-carboxamide isomerase (245 aa).

Residue Asp-7 is the Proton acceptor of the active site. Residue Asp-129 is the Proton donor of the active site.

The protein belongs to the HisA/HisF family.

It is found in the cytoplasm. The enzyme catalyses 1-(5-phospho-beta-D-ribosyl)-5-[(5-phospho-beta-D-ribosylamino)methylideneamino]imidazole-4-carboxamide = 5-[(5-phospho-1-deoxy-D-ribulos-1-ylimino)methylamino]-1-(5-phospho-beta-D-ribosyl)imidazole-4-carboxamide. Its pathway is amino-acid biosynthesis; L-histidine biosynthesis; L-histidine from 5-phospho-alpha-D-ribose 1-diphosphate: step 4/9. The polypeptide is 1-(5-phosphoribosyl)-5-[(5-phosphoribosylamino)methylideneamino] imidazole-4-carboxamide isomerase (Escherichia coli O7:K1 (strain IAI39 / ExPEC)).